Consider the following 200-residue polypeptide: Cysteine dioxygenase type 1 (200 aa).

3 residues coordinate Fe cation: His-86, His-88, and His-140. The 3'-(S-cysteinyl)-tyrosine (Cys-Tyr) cross-link spans 93 to 157; the sequence is CFLKMLQGNL…TEPAVSLHLY (65 aa).

It belongs to the cysteine dioxygenase family. In terms of assembly, monomer. Fe cation is required as a cofactor. It depends on Ni(2+) as a cofactor. Zn(2+) serves as cofactor. In terms of processing, the thioether cross-link between Cys-93 and Tyr-157 plays a structural role through stabilizing the Fe(2+) ion, and prevents the production of highly damaging free hydroxyl radicals by holding the oxygen radical via hydroxyl hydrogen.

It carries out the reaction L-cysteine + O2 = 3-sulfino-L-alanine + H(+). The protein operates within organosulfur biosynthesis; taurine biosynthesis; hypotaurine from L-cysteine: step 1/2. In terms of biological role, catalyzes the oxidation of cysteine to cysteine sulfinic acid with addition of molecular dioxygen. This chain is Cysteine dioxygenase type 1 (CDO1), found in Bos taurus (Bovine).